The chain runs to 229 residues: Histidine biosynthesis bifunctional protein HisIE (229 aa).

Positions Met-1–Val-127 are phosphoribosyl-AMP cyclohydrolase. The interval Val-128–Ser-229 is phosphoribosyl-ATP pyrophosphohydrolase.

The protein in the N-terminal section; belongs to the PRA-CH family. It in the C-terminal section; belongs to the PRA-PH family.

It localises to the cytoplasm. It catalyses the reaction 1-(5-phospho-beta-D-ribosyl)-ATP + H2O = 1-(5-phospho-beta-D-ribosyl)-5'-AMP + diphosphate + H(+). It carries out the reaction 1-(5-phospho-beta-D-ribosyl)-5'-AMP + H2O = 1-(5-phospho-beta-D-ribosyl)-5-[(5-phospho-beta-D-ribosylamino)methylideneamino]imidazole-4-carboxamide. The protein operates within amino-acid biosynthesis; L-histidine biosynthesis; L-histidine from 5-phospho-alpha-D-ribose 1-diphosphate: step 2/9. Its pathway is amino-acid biosynthesis; L-histidine biosynthesis; L-histidine from 5-phospho-alpha-D-ribose 1-diphosphate: step 3/9. The sequence is that of Histidine biosynthesis bifunctional protein HisIE from Wolinella succinogenes (strain ATCC 29543 / DSM 1740 / CCUG 13145 / JCM 31913 / LMG 7466 / NCTC 11488 / FDC 602W) (Vibrio succinogenes).